We begin with the raw amino-acid sequence, 223 residues long: Urease accessory protein UreF (223 aa).

It belongs to the UreF family. In terms of assembly, ureD, UreF and UreG form a complex that acts as a GTP-hydrolysis-dependent molecular chaperone, activating the urease apoprotein by helping to assemble the nickel containing metallocenter of UreC. The UreE protein probably delivers the nickel.

The protein resides in the cytoplasm. Its function is as follows. Required for maturation of urease via the functional incorporation of the urease nickel metallocenter. The polypeptide is Urease accessory protein UreF (Rhizobium etli (strain ATCC 51251 / DSM 11541 / JCM 21823 / NBRC 15573 / CFN 42)).